A 53-amino-acid polypeptide reads, in one-letter code: Large ribosomal subunit protein uL30 (53 aa).

It belongs to the universal ribosomal protein uL30 family. As to quaternary structure, part of the 50S ribosomal subunit.

The chain is Large ribosomal subunit protein uL30 from Deinococcus geothermalis (strain DSM 11300 / CIP 105573 / AG-3a).